The sequence spans 671 residues: UvrABC system protein C (671 aa).

A GIY-YIG domain is found at 16–95; sequence TTPGVYRFRD…IKEFKPRFNV (80 aa). In terms of domain architecture, UVR spans 207–242; that stretch reads KRFISRLEKDMAAAVAELDYERAAGLRDDIIALRKV.

It belongs to the UvrC family. Interacts with UvrB in an incision complex.

It localises to the cytoplasm. Its function is as follows. The UvrABC repair system catalyzes the recognition and processing of DNA lesions. UvrC both incises the 5' and 3' sides of the lesion. The N-terminal half is responsible for the 3' incision and the C-terminal half is responsible for the 5' incision. The sequence is that of UvrABC system protein C from Paenarthrobacter aurescens (strain TC1).